Consider the following 341-residue polypeptide: MEDFPVLEMVCLGSSVALSGLFYYIYRKKRKTVDKLKEAPVMALDAKLIDLLNATPGKCLQYVVVEGTVQPVGEPLRSQFQESSVGVIQKLVLREHKLVWNSLGRIWTDSERVLLQRVNAVPFNLLGLNKSFVRVLCPLEATGPKMEIVHEKFHQATYGFTDLIGQYLSGEKPKGQLETEEMLKVGASLTVVGELILDTDRLLKIRPPTDGSEYFLSSADFETLLMEQEGQAEVWRVFACICALAGVAVLIWTGRRYYRQLKLRWEQENLRREFEGMGTGEREEDNGVENACVICLSNPRGCVLLDCGHVCCCFRCYQALPQPFCPICRQHIKRVVPLYQA.

Topologically, residues 1–5 (MEDFP) are cytoplasmic. The chain crosses the membrane as a helical span at residues 6-26 (VLEMVCLGSSVALSGLFYYIY). Residues 27–233 (RKKRKTVDKL…LLMEQEGQAE (207 aa)) lie on the Mitochondrial intermembrane side of the membrane. Residues 234 to 254 (VWRVFACICALAGVAVLIWTG) traverse the membrane as a helical segment. The Cytoplasmic portion of the chain corresponds to 255-341 (RRYYRQLKLR…IKRVVPLYQA (87 aa)). An RING-type zinc finger spans residues 292-329 (CVICLSNPRGCVLLDCGHVCCCFRCYQALPQPFCPICR).

Homooligomer.

Its subcellular location is the mitochondrion outer membrane. It carries out the reaction S-ubiquitinyl-[E2 ubiquitin-conjugating enzyme]-L-cysteine + [acceptor protein]-L-lysine = [E2 ubiquitin-conjugating enzyme]-L-cysteine + N(6)-ubiquitinyl-[acceptor protein]-L-lysine.. It functions in the pathway protein modification; protein ubiquitination. Functionally, E3 ubiquitin-protein ligase that plays a role in the control of mitochondrial morphology. Promotes mitochondrial fragmentation and influences mitochondrial localization. Inhibits cell growth. E3 ubiquitin ligases accept ubiquitin from an E2 ubiquitin-conjugating enzyme in the form of a thioester and then directly transfer the ubiquitin to targeted substrates. This chain is Mitochondrial ubiquitin ligase activator of nfkb 1-A (mul1a), found in Danio rerio (Zebrafish).